Here is a 1609-residue protein sequence, read N- to C-terminus: Laminin subunit gamma-1 (1609 aa).

The signal sequence occupies residues 1-33; sequence MRGSHRAAPALRPRGRLWPVLAVLAAAAAAGCA. Residues 46–285 enclose the Laminin N-terminal domain; sequence RPQRCMPEFV…AISDFAVGGR (240 aa). N-linked (GlcNAc...) asparagine glycans are attached at residues Asn60 and Asn134. Disulfide bonds link Cys286/Cys295, Cys288/Cys305, Cys307/Cys316, Cys319/Cys339, Cys342/Cys351, Cys344/Cys367, Cys370/Cys379, Cys382/Cys395, Cys398/Cys410, Cys400/Cys416, Cys418/Cys427, Cys430/Cys442, Cys445/Cys456, Cys447/Cys463, Cys465/Cys474, and Cys477/Cys492. Laminin EGF-like domains are found at residues 286 to 341, 342 to 397, 398 to 444, and 445 to 494; these read CKCN…ECLP, CDCN…ACSS, CHCS…GCRP, and CSCD…GCTP. In terms of domain architecture, Laminin EGF-like 5; first part spans 495–504; the sequence is CFCFGHSSVC. One can recognise a Laminin IV type A domain in the interval 514-689; sequence SISSTFQIDE…PGVPATWVES (176 aa). Asn576 and Asn650 each carry an N-linked (GlcNAc...) asparagine glycan. In terms of domain architecture, Laminin EGF-like 5; second part spans 690–723; that stretch reads CTCPVGYGGQFCEMCLSGYRRETPNLGPYSPCVL. 24 cysteine pairs are disulfide-bonded: Cys724–Cys733, Cys726–Cys740, Cys742–Cys751, Cys754–Cys770, Cys773–Cys781, Cys775–Cys792, Cys795–Cys804, Cys807–Cys825, Cys828–Cys842, Cys830–Cys849, Cys852–Cys861, Cys864–Cys881, Cys884–Cys898, Cys886–Cys905, Cys907–Cys916, Cys919–Cys932, Cys935–Cys947, Cys937–Cys954, Cys956–Cys965, Cys968–Cys980, Cys983–Cys995, Cys985–Cys1001, Cys1003–Cys1012, and Cys1015–Cys1028. 6 consecutive Laminin EGF-like domains span residues 724–772, 773–827, 828–883, 884–934, 935–982, and 983–1030; these read CACN…DCQP, CPCP…LCRL, CQCS…KCKA, CNCN…GCER, CDCH…GCKP, and CDCH…GCQE. N-linked (GlcNAc...) asparagine glycosylation is found at Asn1022 and Asn1107. Positions 1030 to 1609 are domain II and I; sequence ECPACYRLVK…CFNTPSIEKP (580 aa). Residues 1038–1609 are a coiled coil; sequence VKDKVADHRV…CFNTPSIEKP (572 aa). Ser1149 bears the Phosphoserine; by FAM20C mark. N-linked (GlcNAc...) asparagine glycans are attached at residues Asn1161, Asn1175, Asn1205, Asn1223, Asn1241, Asn1380, Asn1395, and Asn1439. At Ser1493 the chain carries Phosphoserine.

Laminin is a complex glycoprotein, consisting of three different polypeptide chains (alpha, beta, gamma), which are bound to each other by disulfide bonds into a cross-shaped molecule comprising one long and three short arms with globules at each end. Gamma-1 is a subunit of laminin-1 (laminin-111 or EHS laminin), laminin-2 (laminin-211 or merosin), laminin-3 (laminin-121 or S-laminin), laminin-4 (laminin-221 or S-merosin), laminin-6 (laminin-311 or K-laminin), laminin-7 (laminin-321 or KS-laminin), laminin-8 (laminin-411), laminin-9 (laminin-421), laminin-10 (laminin-511) and laminin-11 (laminin-521). Interacts with SVEP1. Found in the basement membranes (major component).

The protein localises to the secreted. It is found in the extracellular space. It localises to the extracellular matrix. The protein resides in the basement membrane. Functionally, binding to cells via a high affinity receptor, laminin is thought to mediate the attachment, migration and organization of cells into tissues during embryonic development by interacting with other extracellular matrix components. In Homo sapiens (Human), this protein is Laminin subunit gamma-1.